A 649-amino-acid chain; its full sequence is Leucine-rich repeat transmembrane protein FLRT3 (649 aa).

The signal sequence occupies residues 1–28; that stretch reads MISAAWSIFLIGTKIGLFLQVAPLSVMA. An LRRNT domain is found at 29-58; sequence KSCPSVCRCDAGFIYCNDRFLTSIPTGIPE. Residues 29 to 528 are Extracellular-facing; sequence KSCPSVCRCD…KEPYKNPNLP (500 aa). Intrachain disulfides connect Cys-31/Cys-37 and Cys-35/Cys-44. An interaction with ADGRL3 region spans residues 38–67; the sequence is DAGFIYCNDRFLTSIPTGIPEDATTLYLQN. LRR repeat units lie at residues 59–80, 84–104, 105–126, 129–150, 155–175, 176–197, 200–220, 226–247, 248–269, and 272–293; these read DATT…SDLK, KVER…NLPK, YVKE…SLSK, YLEE…EGAF, YLRL…GLPR, TIEE…SLQG, SLKR…GDKV, NLTE…LPGT, NLRK…AFSY, and QLYR…IFDD. N-linked (GlcNAc...) asparagine glycosylation occurs at Asn-226. 2 N-linked (GlcNAc...) asparagine glycosylation sites follow: Asn-282 and Asn-296. In terms of domain architecture, LRRCT spans 305 to 357; that stretch reads NPWYCGCKMKWVRDWLQSLPVKVNVRGLMCQAPEKVRGMAIKDLNAELFDCKD. An intrachain disulfide couples Cys-309 to Cys-334. A disordered region spans residues 387-407; it reads KQPDIKNPKLTKDHQTTGSPS. Over residues 389–401 the composition is skewed to basic and acidic residues; it reads PDIKNPKLTKDHQ. Residues 409-504 enclose the Fibronectin type-III domain; it reads KTITITVKSV…VCIETETAPL (96 aa). The chain crosses the membrane as a helical span at residues 529–549; sequence LAAIIGGAVALVTIALLALVC. The Cytoplasmic segment spans residues 550–649; sequence WYVHRNGSLF…GIPDSDHSHS (100 aa). A disordered region spans residues 622 to 649; the sequence is LYKNNHSESSSNRSYRDSGIPDSDHSHS.

Monomer and homodimer. Self-associates (via leucine-rich repeats), giving rise to homooligomers. Interacts with FGFR1. Interacts (via extracellular domain) with ADGRL1/LPHN1 and LPHN2 (via olfactomedin-like domain). Interacts (via extracellular domain) with ADGRL3 (via olfactomedin-like domain); the interaction is direct. Interacts (via extracellular domain) with UNC5B and UNC5D (via extracellular domain); the interaction is direct. Identified in complexes composed of FLRT3, ADGRL3 and UNC5B, respectively FLRT3, ADGRL3 and UNC5D. May also interact (via extracellular domain) with UNC5A and UNC5C. Interacts (via cytoplasmic domain) with ROBO1. Post-translationally, N-glycosylated. In terms of processing, proteolytic cleavage in the juxtamembrane region gives rise to a soluble ectodomain. Cleavage is probably effected by a metalloprotease. As to expression, expressed in kidney, brain, pancreas, skeletal muscle, lung, liver, placenta, and heart.

The protein localises to the cell membrane. The protein resides in the presynaptic cell membrane. Its subcellular location is the endoplasmic reticulum membrane. It is found in the cell junction. It localises to the focal adhesion. The protein localises to the secreted. The protein resides in the cell projection. Its subcellular location is the axon. It is found in the growth cone membrane. Functions in cell-cell adhesion, cell migration and axon guidance, exerting an attractive or repulsive role depending on its interaction partners. Plays a role in the spatial organization of brain neurons. Plays a role in vascular development in the retina. Plays a role in cell-cell adhesion via its interaction with ADGRL3 and probably also other latrophilins that are expressed at the surface of adjacent cells. Interaction with the intracellular domain of ROBO1 mediates axon attraction towards cells expressing NTN1. Mediates axon growth cone collapse and plays a repulsive role in neuron guidance via its interaction with UNC5B, and possibly also other UNC-5 family members. Promotes neurite outgrowth (in vitro). Mediates cell-cell contacts that promote an increase both in neurite number and in neurite length. Plays a role in the regulation of the density of glutamaergic synapses. Plays a role in fibroblast growth factor-mediated signaling cascades. Required for normal morphogenesis during embryonic development, but not for normal embryonic patterning. Required for normal ventral closure, headfold fusion and definitive endoderm migration during embryonic development. Required for the formation of a normal basement membrane and the maintenance of a normal anterior visceral endoderm during embryonic development. The protein is Leucine-rich repeat transmembrane protein FLRT3 (FLRT3) of Homo sapiens (Human).